The following is a 540-amino-acid chain: Beta-2-syntrophin (540 aa).

A disordered region spans residues 73 to 114 (LPNGGGAGDSLPGSPSRGLGPPSPPAPPRGPAGEAGASPPVR). Residues 81-92 (DSLPGSPSRGLG) show a composition bias toward low complexity. Positions 93 to 102 (PPSPPAPPRG) are enriched in pro residues. 8 positions are modified to phosphoserine: S95, S110, S129, S211, S222, S233, S393, and S395. The segment covering 103-112 (PAGEAGASPP) has biased composition (low complexity). Residues 115–198 (RVRVVKQEAG…EVLLEVKFIR (84 aa)) enclose the PDZ domain. 2 consecutive PH domains span residues 163 to 300 (ILSV…TNIM) and 325 to 437 (EVKH…QGCH). A disordered region spans residues 220 to 240 (PQSPSFSGSEDSGSPKHQNST). The span at 222 to 231 (SPSFSGSEDS) shows a compositional bias: low complexity. Residues 484 to 540 (PFERLKMSADDGIRNLYLDFGGPEGELTMDLHSCPKPIVFVLHTFLSAKVTRMGLLV) enclose the SU domain. The interval 518 to 540 (PKPIVFVLHTFLSAKVTRMGLLV) is calmodulin-binding.

It belongs to the syntrophin family. As to quaternary structure, monomer and homodimer. Interacts with the other members of the syntrophin family: SNTA1 and SNTB1; and with the sodium channel proteins SCN4A and SCN5A. Interacts with SAST, MAST205, microtubules and microtubule-associated proteins. Interacts with the dystrophin protein DMD and related proteins DTNA and UTRN, and with the neuroregulin receptor ERBB4. Interacts with PTPRN when phosphorylated, protecting PTPRN from protein cleavage by CAPN1. Dephosphorylation upon insulin stimulation disrupts the interaction with PTPRN and results in the cleavage of PTPRN. Interacts with DTNB. Phosphorylated. Partially dephosphorylated upon insulin stimulation. As to expression, ubiquitous. Isoform 1 is the predominant isoform. Weak level of isoform 2 is present in all tested tissues, except in liver and heart where it is highly expressed.

The protein resides in the membrane. It localises to the cytoplasmic vesicle. Its subcellular location is the secretory vesicle membrane. It is found in the cell junction. The protein localises to the cytoplasm. The protein resides in the cytoskeleton. Adapter protein that binds to and probably organizes the subcellular localization of a variety of membrane proteins. May link various receptors to the actin cytoskeleton and the dystrophin glycoprotein complex. May play a role in the regulation of secretory granules via its interaction with PTPRN. In Homo sapiens (Human), this protein is Beta-2-syntrophin (SNTB2).